The sequence spans 164 residues: Phosphopantetheine adenylyltransferase (164 aa).

Residue Ser-11 participates in substrate binding. ATP is bound by residues 11-12 and His-19; that span reads SF. Positions 43, 76, and 90 each coordinate substrate. ATP-binding positions include 91–93, Glu-101, and 126–132; these read GLR and YQHISSS.

The protein belongs to the bacterial CoaD family. In terms of assembly, homohexamer. The cofactor is Mg(2+).

The protein localises to the cytoplasm. The catalysed reaction is (R)-4'-phosphopantetheine + ATP + H(+) = 3'-dephospho-CoA + diphosphate. It functions in the pathway cofactor biosynthesis; coenzyme A biosynthesis; CoA from (R)-pantothenate: step 4/5. Its function is as follows. Reversibly transfers an adenylyl group from ATP to 4'-phosphopantetheine, yielding dephospho-CoA (dPCoA) and pyrophosphate. This chain is Phosphopantetheine adenylyltransferase, found in Streptococcus sanguinis (strain SK36).